The sequence spans 276 residues: Ribonuclease T2 (276 aa).

The N-terminal stretch at 1-17 is a signal peptide; sequence MGMLALGAMQLAAGAVF. Intrachain disulfides connect C22/C41, C30/C77, C40/C143, C85/C135, and C208/C242. N-linked (GlcNAc...) asparagine glycosylation is present at N32. Residue H70 is part of the active site. N-linked (GlcNAc...) asparagine glycosylation occurs at N93. Active-site residues include E128 and H132. N-linked (GlcNAc...) asparagine glycosylation occurs at N256.

This sequence belongs to the RNase T2 family.

It catalyses the reaction a ribonucleotidyl-ribonucleotide-RNA + H2O = a 3'-end 3'-phospho-ribonucleotide-RNA + a 5'-end dephospho-ribonucleoside-RNA + H(+). The protein is Ribonuclease T2 (rntB) of Aspergillus oryzae (strain ATCC 42149 / RIB 40) (Yellow koji mold).